A 268-amino-acid polypeptide reads, in one-letter code: Cytochrome c oxidase subunit 3 (268 aa).

Transmembrane regions (helical) follow at residues 19 to 39 (PWPILVSFSLFNLAIGTVLTM), 49 to 69 (FDLGLAVTVGSILLWTRDIVI), 85 to 105 (LIIGFILFIISEVFAFISVFW), 124 to 144 (PVGIIPLDTFSLPLFNTIILL), 165 to 185 (SIIGLFLTVALALIFSYFQAF), 202 to 222 (VFFASTGLHGIHVMLGTLFLF), and 245 to 265 (ILYWHFVDLVWLFLFLVVYFW).

The protein belongs to the cytochrome c oxidase subunit 3 family. In terms of assembly, component of the cytochrome c oxidase (complex IV, CIV), a multisubunit enzyme composed of a catalytic core of 3 subunits and several supernumerary subunits. The complex exists as a monomer or a dimer and forms supercomplexes (SCs) in the inner mitochondrial membrane with ubiquinol-cytochrome c oxidoreductase (cytochrome b-c1 complex, complex III, CIII).

It localises to the mitochondrion inner membrane. The enzyme catalyses 4 Fe(II)-[cytochrome c] + O2 + 8 H(+)(in) = 4 Fe(III)-[cytochrome c] + 2 H2O + 4 H(+)(out). Its function is as follows. Component of the cytochrome c oxidase, the last enzyme in the mitochondrial electron transport chain which drives oxidative phosphorylation. The respiratory chain contains 3 multisubunit complexes succinate dehydrogenase (complex II, CII), ubiquinol-cytochrome c oxidoreductase (cytochrome b-c1 complex, complex III, CIII) and cytochrome c oxidase (complex IV, CIV), that cooperate to transfer electrons derived from NADH and succinate to molecular oxygen, creating an electrochemical gradient over the inner membrane that drives transmembrane transport and the ATP synthase. Cytochrome c oxidase is the component of the respiratory chain that catalyzes the reduction of oxygen to water. Electrons originating from reduced cytochrome c in the intermembrane space (IMS) are transferred via the dinuclear copper A center (CU(A)) of subunit 2 and heme A of subunit 1 to the active site in subunit 1, a binuclear center (BNC) formed by heme A3 and copper B (CU(B)). The BNC reduces molecular oxygen to 2 water molecules using 4 electrons from cytochrome c in the IMS and 4 protons from the mitochondrial matrix. This is Cytochrome c oxidase subunit 3 (COIII) from Schizophyllum commune (Split gill fungus).